Here is a 354-residue protein sequence, read N- to C-terminus: Kelch domain-containing protein 8B (354 aa).

8 Kelch repeats span residues 1–31 (MSAG…HQDG), 32–79 (HLLV…VLGK), 81–127 (VLVV…ERDG), 128–175 (MVYA…LHGN), 176–222 (KIYV…MAEG), 224–281 (VFSL…SLGG), 282–329 (HIVA…QAGP), and 331–354 (LFVI…RDGV).

The protein resides in the cytoplasm. The protein localises to the midbody. Involved in pinching off the separated nuclei at the cleavage furrow and in cytokinesis. Required for mitotic integrity and maintenance of chromosomal stability. Protects cells against mitotic errors, centrosomal amplification, micronucleus formation and aneuploidy. Plays a key role of midbody function involving abscission of the daughter cells during cytokinesis and appropriate chromosomal and nuclear segregation into the daughter cells. This Homo sapiens (Human) protein is Kelch domain-containing protein 8B.